A 223-amino-acid chain; its full sequence is MASKLLRAVILGPPGSGKGTVCQRIAQNFGLQHLSSGHFLRENIKASTEVGEMAKQYIEKSLLVPDHVITRLMMSELENRRGQHWLLDGFPRTLGQAEALDKICEVDLVISLNIPFETLKDRLSRRWIHPPSGRVYNLDFNPPHVHGIDDVTGEPLVQQEDDKPEAVAARLRQYKDVAKPVIELYKSRGVLHQFSGTETNKIWPYVYTLFSNKITPIQSKEAY.

Residue 15–20 (GSGKGT) coordinates a ribonucleoside 5'-triphosphate. Residues 35-64 (SSGHFLRENIKASTEVGEMAKQYIEKSLLV) form an NMP region. Positions 36 and 41 each coordinate AMP. Residue K60 is modified to N6-succinyllysine. Residues 62–64 (LLV), 89–92 (GFPR), and Q96 contribute to the AMP site. Residues 125–162 (RRWIHPPSGRVYNLDFNPPHVHGIDDVTGEPLVQQEDD) form an LID region. Residues R126 and 135–136 (VY) contribute to the a ribonucleoside 5'-triphosphate site. R170 serves as a coordination point for AMP. K175 carries the N6-acetyllysine modification. K179 and K186 each carry N6-acetyllysine; alternate. N6-succinyllysine; alternate is present on residues K179 and K186. A ribonucleoside 5'-triphosphate is bound at residue T199.

This sequence belongs to the adenylate kinase family. AK3 subfamily. In terms of assembly, monomer. Interacts with SLC25A5/ANT2. In terms of tissue distribution, highly expressed in kidney, moderately expressed in heart and liver and weakly expressed in brain.

It is found in the mitochondrion matrix. It catalyses the reaction a ribonucleoside 5'-phosphate + ATP = a ribonucleoside 5'-diphosphate + ADP. The enzyme catalyses AMP + ATP = 2 ADP. It carries out the reaction GTP + AMP = GDP + ADP. The catalysed reaction is CMP + ATP = CDP + ADP. It catalyses the reaction GTP + CMP = CDP + GDP. The enzyme catalyses dAMP + ATP = dADP + ADP. It carries out the reaction dCMP + ATP = dCDP + ADP. The catalysed reaction is a 2'-deoxyribonucleoside 5'-diphosphate + ATP = a 2'-deoxyribonucleoside 5'-triphosphate + ADP. It catalyses the reaction a ribonucleoside 5'-diphosphate + ATP = a ribonucleoside 5'-triphosphate + ADP. The enzyme catalyses GDP + ATP = GTP + ADP. It carries out the reaction CDP + GTP = CTP + GDP. The catalysed reaction is CDP + ATP = CTP + ADP. It catalyses the reaction UDP + ATP = UTP + ADP. The enzyme catalyses GTP + UDP = UTP + GDP. It carries out the reaction dADP + GTP = dATP + GDP. The catalysed reaction is dCDP + GTP = dCTP + GDP. It catalyses the reaction dCDP + ATP = dCTP + ADP. The enzyme catalyses dGDP + ATP = dGTP + ADP. It carries out the reaction dTDP + GTP = dTTP + GDP. The catalysed reaction is dTDP + ATP = dTTP + ADP. Functionally, broad-specificity mitochondrial nucleoside phosphate kinase involved in cellular nucleotide homeostasis by catalyzing nucleoside-phosphate interconversions. Similar to other adenylate kinases, preferentially catalyzes the phosphorylation of the nucleoside monophosphate AMP with ATP as phosphate donor to produce ADP. Phosphorylates only AMP when using GTP as phosphate donor. In vitro, can also catalyze the phosphorylation of CMP, dAMP and dCMP and use GTP as an alternate phosphate donor. Moreover, exhibits a diphosphate kinase activity, producing ATP, CTP, GTP, UTP, TTP, dATP, dCTP and dGTP from the corresponding diphosphate substrates with either ATP or GTP as phosphate donors. Plays a role in controlling cellular ATP levels by regulating phosphorylation and activation of the energy sensor protein kinase AMPK. Plays a protective role in the cellular response to oxidative stress. The protein is Adenylate kinase 4, mitochondrial of Homo sapiens (Human).